The primary structure comprises 125 residues: Ribosome-binding factor A (125 aa).

The protein belongs to the RbfA family. As to quaternary structure, monomer. Binds 30S ribosomal subunits, but not 50S ribosomal subunits or 70S ribosomes.

It localises to the cytoplasm. One of several proteins that assist in the late maturation steps of the functional core of the 30S ribosomal subunit. Associates with free 30S ribosomal subunits (but not with 30S subunits that are part of 70S ribosomes or polysomes). Required for efficient processing of 16S rRNA. May interact with the 5'-terminal helix region of 16S rRNA. This chain is Ribosome-binding factor A, found in Fervidobacterium nodosum (strain ATCC 35602 / DSM 5306 / Rt17-B1).